Consider the following 189-residue polypeptide: Putative 3-methyladenine DNA glycosylase (189 aa).

It belongs to the DNA glycosylase MPG family.

This is Putative 3-methyladenine DNA glycosylase (mag) from Corynebacterium glutamicum (strain ATCC 13032 / DSM 20300 / JCM 1318 / BCRC 11384 / CCUG 27702 / LMG 3730 / NBRC 12168 / NCIMB 10025 / NRRL B-2784 / 534).